The following is a 303-amino-acid chain: Putative deoxyribose-phosphate aldolase (303 aa).

Aspartate 157 (proton donor/acceptor) is an active-site residue. The Schiff-base intermediate with acetaldehyde role is filled by lysine 220. The active-site Proton donor/acceptor is lysine 256.

The protein belongs to the DeoC/FbaB aldolase family. DeoC type 2 subfamily.

The catalysed reaction is 2-deoxy-D-ribose 5-phosphate = D-glyceraldehyde 3-phosphate + acetaldehyde. The protein operates within carbohydrate degradation; 2-deoxy-D-ribose 1-phosphate degradation; D-glyceraldehyde 3-phosphate and acetaldehyde from 2-deoxy-alpha-D-ribose 1-phosphate: step 2/2. In terms of biological role, catalyzes a reversible aldol reaction between acetaldehyde and D-glyceraldehyde 3-phosphate to generate 2-deoxy-D-ribose 5-phosphate. The polypeptide is Putative deoxyribose-phosphate aldolase (Caenorhabditis elegans).